Consider the following 324-residue polypeptide: Tetrahydromethanopterin:alpha-L-glutamate ligase (324 aa).

An ATP-grasp domain is found at 113-321; sequence SYLLARAGLP…PAEYILEYLQ (209 aa). ATP is bound by residues lysine 148, 195-204, and arginine 220; that span reads QEFIENPGRD. Residue aspartate 265 coordinates Mg(2+). Residue aspartate 265 participates in Mn(2+) binding. A disordered region spans residues 274–293; that stretch reads TGNENKKTEDKSTGQGSRIL. Residues glutamate 294 and asparagine 296 each contribute to the Mg(2+) site. Glutamate 294 and asparagine 296 together coordinate Mn(2+).

It belongs to the RimK family. MptN subfamily. In terms of assembly, homodimer. Mg(2+) serves as cofactor. Mn(2+) is required as a cofactor.

The catalysed reaction is 5,6,7,8-tetrahydromethanopterin + L-glutamate + ATP = 5,6,7,8-tetrahydrosarcinapterin + ADP + phosphate + H(+). The protein operates within cofactor biosynthesis; 5,6,7,8-tetrahydrosarcinapterin biosynthesis. Its function is as follows. Catalyzes the ATP or GTP-dependent addition of one L-glutamate molecule to tetrahydromethanopterin, producing tetrahydrosarcinapterin. The chain is Tetrahydromethanopterin:alpha-L-glutamate ligase (mptN) from Methanosarcina acetivorans (strain ATCC 35395 / DSM 2834 / JCM 12185 / C2A).